A 200-amino-acid polypeptide reads, in one-letter code: NADH-quinone oxidoreductase subunit C (200 aa).

Belongs to the complex I 30 kDa subunit family. As to quaternary structure, NDH-1 is composed of 14 different subunits. Subunits NuoB, C, D, E, F, and G constitute the peripheral sector of the complex.

The protein resides in the cell inner membrane. The catalysed reaction is a quinone + NADH + 5 H(+)(in) = a quinol + NAD(+) + 4 H(+)(out). Functionally, NDH-1 shuttles electrons from NADH, via FMN and iron-sulfur (Fe-S) centers, to quinones in the respiratory chain. The immediate electron acceptor for the enzyme in this species is believed to be ubiquinone. Couples the redox reaction to proton translocation (for every two electrons transferred, four hydrogen ions are translocated across the cytoplasmic membrane), and thus conserves the redox energy in a proton gradient. This is NADH-quinone oxidoreductase subunit C from Rhizobium rhizogenes (strain K84 / ATCC BAA-868) (Agrobacterium radiobacter).